The chain runs to 279 residues: Gas vesicle protein L2 (279 aa).

The protein belongs to the gas vesicle GvpF/GvpL family. In terms of assembly, gvpF to GvpM interact with each other in vitro, and may form multi-subunit complex(es). Interacts with GvpC, GvpN and GvpO.

The protein localises to the gas vesicle. Proteins GvpF to GvpM might be involved in nucleating gas vesicle formation. A minor component of the gas vesicle. Gas vesicles are hollow, gas filled proteinaceous nanostructures found in several microbial planktonic microorganisms. They allow positioning of halobacteria at the optimal depth for growth in the poorly aerated, shallow brine pools of their habitat. In terms of biological role, expression of 2 c-vac DNA fragments containing 2 divergently transcribed regions (gvpE-gvpF-gvpG-gvpH-gvpI-gvpJ-gvpK-gvpL-gvpM and gvpA-gvpC-gvpN-gvpO) allows H.volcanii to produce gas vesicles. In Halobacterium salinarum (strain ATCC 700922 / JCM 11081 / NRC-1) (Halobacterium halobium), this protein is Gas vesicle protein L2.